The sequence spans 339 residues: Annexin A2 (339 aa).

An N-acetylserine modification is found at serine 2. Residues 2-24 are S100A10-binding site; sequence STVHEILCKLSLEGDHSTPPSAY. A Phosphotyrosine; by SRC modification is found at tyrosine 24. Phosphoserine; by PKC is present on serine 26. 2 Annexin repeats span residues 33-104 and 105-176; these read FDAE…GLLK and TPAQ…ALAK. Lysine 49 is modified (N6-acetyllysine; alternate). A Glycyl lysine isopeptide (Lys-Gly) (interchain with G-Cter in SUMO1); alternate cross-link involves residue lysine 49. Lysine 49 participates in a covalent cross-link: Glycyl lysine isopeptide (Lys-Gly) (interchain with G-Cter in SUMO2); alternate. N6-acetyllysine is present on lysine 152. Phosphoserine is present on serine 184. Annexin repeat units lie at residues 189–261 and 265–336; these read ELID…NLVQ and NKPL…YLCG. At tyrosine 199 the chain carries Phosphotyrosine. Lysine 227 is modified (N6-acetyllysine).

It belongs to the annexin family. As to quaternary structure, heterotetramer containing 2 light chains of S100A10/p11 and 2 heavy chains of ANXA2/p36. Interacts with ATP1B1. Interacts with DYSF. Interacts with COCH. Interacts (via repeat Annexin 1) with PCSK9 (via the C-terminal domain); the interaction inhibits the degradation of LDLR. Interacts with CEACAM1 (via the cytoplasmic domain); this interaction is regulated by phosphorylation of CEACAM1. Interacts with APPL2 and APPL1; targets APPL2 to endosomes and acting in parallel to RAB5A. Interacts with S100A4. May interact with UBAP2. Interacts with PLEKHG4B; this interaction is required for PLEKHG4B localization to cell-cell adhesions. (Microbial infection) Interacts with human cytomegalovirus (HCMV). In terms of assembly, (Microbial infection) Interacts with M.pneumoniae CARDS toxin; CARDS probably uses this protein as a receptor. A portion of internalized CARDS remains associated with intracellular annexin 2. Post-translationally, phosphorylation of Tyr-24 enhances heat stress-induced translocation to the cell surface. In terms of processing, ISGylated.

It localises to the secreted. The protein localises to the extracellular space. Its subcellular location is the extracellular matrix. The protein resides in the basement membrane. It is found in the melanosome. Functionally, calcium-regulated membrane-binding protein whose affinity for calcium is greatly enhanced by anionic phospholipids. It binds two calcium ions with high affinity. May be involved in heat-stress response. Inhibits PCSK9-enhanced LDLR degradation, probably reduces PCSK9 protein levels via a translational mechanism but also competes with LDLR for binding with PCSK9. Binds to endosomes damaged by phagocytosis of particulate wear debris and participates in endosomal membrane stabilization, thereby limiting NLRP3 inflammasome activation. Required for endothelial cell surface plasmin generation and may support fibrinolytic surveillance and neoangiogenesis. (Microbial infection) Binds M.pneumoniae CARDS toxin, probably serves as one receptor for this pathogen. When ANXA2 is down-regulated by siRNA, less toxin binds to human cells and less vacuolization (a symptom of M.pneumoniae infection) is seen. This is Annexin A2 (ANXA2) from Homo sapiens (Human).